Reading from the N-terminus, the 224-residue chain is UPF0758 protein lin1584 (224 aa).

The 123-residue stretch at 102-224 folds into the MPN domain; that stretch reads VIRCPEDAVK…YISLKEKGYF (123 aa). 3 residues coordinate Zn(2+): H173, H175, and D186. The JAMM motif motif lies at 173 to 186; sequence HNHPSGDPAPSSED.

The protein belongs to the UPF0758 family.

The chain is UPF0758 protein lin1584 from Listeria innocua serovar 6a (strain ATCC BAA-680 / CLIP 11262).